The primary structure comprises 277 residues: MGIKKFKPTTNGRRNMTGSDFAEITKTKPEKSLLVSKSKTAGRNAYGRITVRHRGGGHKRKYRLIDFKRVKDNVPATVKAIEYDPNRSANIALLVYADGVKSYILAPKGLKVGQVVESGKDVDIKVGNTLPLANIPVGTVIHNIELKPGKGGQLVRSAGTSAQLLGKEGKYAIIRLTSGEVRMILVTCRATIGAVGNEQHELIKVGKAGRARWAGKRPQSRGSVMNPNDHPHGGGEGKAPVGRPSPMSPWGKKTTGLKTRSKKARSNKFIVRSRNKK.

2 stretches are compositionally biased toward basic residues: residues 210–219 (RARWAGKRPQ) and 259–277 (TRSK…RNKK). The disordered stretch occupies residues 210 to 277 (RARWAGKRPQ…KFIVRSRNKK (68 aa)).

This sequence belongs to the universal ribosomal protein uL2 family. Part of the 50S ribosomal subunit. Forms a bridge to the 30S subunit in the 70S ribosome.

Functionally, one of the primary rRNA binding proteins. Required for association of the 30S and 50S subunits to form the 70S ribosome, for tRNA binding and peptide bond formation. It has been suggested to have peptidyltransferase activity; this is somewhat controversial. Makes several contacts with the 16S rRNA in the 70S ribosome. The sequence is that of Large ribosomal subunit protein uL2 from Ligilactobacillus salivarius (strain UCC118) (Lactobacillus salivarius).